Here is a 31-residue protein sequence, read N- to C-terminus: uncharacterized protein (31 aa).

This is an uncharacterized protein from Chlamydia phage 1 (Bacteriophage Chp1).